A 203-amino-acid chain; its full sequence is Serine hydrolase-like protein (203 aa).

The AB hydrolase-1 domain occupies 33-145 (PPVLCLHGWL…FLLESDEMEN (113 aa)). Ser108 is a catalytic residue.

It belongs to the AB hydrolase superfamily.

In terms of biological role, putative serine hydrolase. This Homo sapiens (Human) protein is Serine hydrolase-like protein (SERHL).